The sequence spans 216 residues: 1-Cys peroxiredoxin PER1 (216 aa).

Residues 4–159 (ITLGDTVPNL…VLRALDSLLM (156 aa)) form the Thioredoxin domain. Cys-46 functions as the Cysteine sulfenic acid (-SOH) intermediate in the catalytic mechanism. The Bipartite nuclear localization signal signature appears at 191 to 214 (KKMFPQGFKTADLPSKKGYLRHTE).

Belongs to the peroxiredoxin family. Prx6 subfamily. In terms of tissue distribution, predominantly expressed in seed. Expressed in endosperm, embryo and aleurone cells. Also detected in young seedlings, abscission zones, stem branching points.

It is found in the nucleus. The protein localises to the cytoplasm. It carries out the reaction a hydroperoxide + [thioredoxin]-dithiol = an alcohol + [thioredoxin]-disulfide + H2O. In terms of biological role, thiol-specific peroxidase that catalyzes the reduction of hydrogen peroxide and organic hydroperoxides to water and alcohols, respectively. Seems to contribute to the inhibition of germination during stress. The polypeptide is 1-Cys peroxiredoxin PER1 (PER1) (Arabidopsis thaliana (Mouse-ear cress)).